The chain runs to 222 residues: Eukaryotic translation initiation factor 3 subunit K (222 aa).

Residues Tyr46–Lys208 form the PCI domain.

The protein belongs to the eIF-3 subunit K family. Component of the eukaryotic translation initiation factor 3 (eIF-3) complex. The eIF-3 complex interacts with pix.

The protein localises to the cytoplasm. Functionally, component of the eukaryotic translation initiation factor 3 (eIF-3) complex, which is involved in protein synthesis of a specialized repertoire of mRNAs and, together with other initiation factors, stimulates binding of mRNA and methionyl-tRNAi to the 40S ribosome. The eIF-3 complex specifically targets and initiates translation of a subset of mRNAs involved in cell proliferation. The sequence is that of Eukaryotic translation initiation factor 3 subunit K from Drosophila erecta (Fruit fly).